The following is a 31-amino-acid chain: Sarcolipin (31 aa).

Residues M1–E7 lie on the Cytoplasmic side of the membrane. The chain crosses the membrane as a helical span at residues L8–V26. At R27–Y31 the chain is on the lumenal side.

Belongs to the sarcolipin family. In terms of assembly, homooligomer. Can also form heterooligomers with other sarcoplasmic/endoplasmic reticulum calcium ATPase (SERCA) regulators ARLN, ERLN, PLN and STRIT1/DWORF. Monomer. Interacts with calcium ATPase ATP2A1/SERCA1. Interacts as a monomer with ATP2A2/SERCA2; the interaction decreases ATP2A2 Ca(2+) affinity. Interacts with VMP1; VMP1 competes with PLN and SLN to prevent them from forming an inhibitory complex with ATP2A2.

The protein resides in the sarcoplasmic reticulum membrane. The protein localises to the endoplasmic reticulum membrane. In terms of biological role, reversibly inhibits the activity of ATP2A1/SERCA1 and ATP2A2/SERCA2 in sarcoplasmic reticulum by decreasing the apparent affinity of the ATPase for Ca(2+). Also inhibits the activity of ATP2A3/SERCA3. Modulates calcium re-uptake during muscle relaxation and plays an important role in calcium homeostasis in muscle. Required for muscle-based, non-shivering thermogenesis. This Homo sapiens (Human) protein is Sarcolipin.